A 165-amino-acid polypeptide reads, in one-letter code: Chorismate pyruvate-lyase (165 aa).

Residues methionine 35, arginine 77, leucine 115, and glutamate 156 each coordinate substrate.

This sequence belongs to the UbiC family. In terms of assembly, monomer.

Its subcellular location is the cytoplasm. It carries out the reaction chorismate = 4-hydroxybenzoate + pyruvate. It participates in cofactor biosynthesis; ubiquinone biosynthesis. Removes the pyruvyl group from chorismate, with concomitant aromatization of the ring, to provide 4-hydroxybenzoate (4HB) for the ubiquinone pathway. The protein is Chorismate pyruvate-lyase of Escherichia coli O127:H6 (strain E2348/69 / EPEC).